A 509-amino-acid chain; its full sequence is tRNA-2-methylthio-N(6)-dimethylallyladenosine synthase (509 aa).

The span at methionine 1–serine 15 shows a compositional bias: polar residues. The interval methionine 1–tyrosine 26 is disordered. The span at threonine 16–lysine 25 shows a compositional bias: basic and acidic residues. An MTTase N-terminal domain is found at arginine 66–phenylalanine 184. [4Fe-4S] cluster contacts are provided by cysteine 75, cysteine 111, cysteine 145, cysteine 221, cysteine 225, and cysteine 228. A Radical SAM core domain is found at arginine 207–glutamate 437. Positions aspartate 440–glutamate 503 constitute a TRAM domain.

It belongs to the methylthiotransferase family. MiaB subfamily. Monomer. [4Fe-4S] cluster serves as cofactor.

It is found in the cytoplasm. The enzyme catalyses N(6)-dimethylallyladenosine(37) in tRNA + (sulfur carrier)-SH + AH2 + 2 S-adenosyl-L-methionine = 2-methylsulfanyl-N(6)-dimethylallyladenosine(37) in tRNA + (sulfur carrier)-H + 5'-deoxyadenosine + L-methionine + A + S-adenosyl-L-homocysteine + 2 H(+). Its function is as follows. Catalyzes the methylthiolation of N6-(dimethylallyl)adenosine (i(6)A), leading to the formation of 2-methylthio-N6-(dimethylallyl)adenosine (ms(2)i(6)A) at position 37 in tRNAs that read codons beginning with uridine. This chain is tRNA-2-methylthio-N(6)-dimethylallyladenosine synthase, found in Bacillus cereus (strain ZK / E33L).